The primary structure comprises 114 residues: Large ribosomal subunit protein P2 (114 aa).

Over residues 76–91 the composition is skewed to low complexity; it reads PAAAAAAGGGDSSSAA. Residues 76–114 are disordered; it reads PAAAAAAGGGDSSSAAKETKKEEPEEEEEDGDMGLSLFD.

This sequence belongs to the eukaryotic ribosomal protein P1/P2 family. P1 and P2 exist as dimers at the large ribosomal subunit. Post-translationally, phosphorylated.

Plays an important role in the elongation step of protein synthesis. The sequence is that of Large ribosomal subunit protein P2 from Eimeria tenella (Coccidian parasite).